Reading from the N-terminus, the 494-residue chain is Inosine-5'-monophosphate dehydrogenase (494 aa).

CBS domains are found at residues 93 to 154 and 158 to 217; these read IIRN…NEKI and MTTD…CKDM. Residues Asp-251 and 301–303 contribute to the NAD(+) site; that span reads GIG. Positions 303 and 305 each coordinate K(+). Position 306 (Ser-306) interacts with IMP. Cys-308 contacts K(+). Cys-308 acts as the Thioimidate intermediate in catalysis. Residues 341–343, 364–365, and 388–392 each bind IMP; these read DGG, GS, and YRGMG. Arg-406 serves as the catalytic Proton acceptor. Position 421 (Glu-421) interacts with IMP. K(+)-binding residues include Glu-475, Ser-476, and His-477.

It belongs to the IMPDH/GMPR family. Homotetramer. K(+) is required as a cofactor.

It carries out the reaction IMP + NAD(+) + H2O = XMP + NADH + H(+). The protein operates within purine metabolism; XMP biosynthesis via de novo pathway; XMP from IMP: step 1/1. Mycophenolic acid (MPA) is a non-competitive inhibitor that prevents formation of the closed enzyme conformation by binding to the same site as the amobile flap. In contrast, mizoribine monophosphate (MZP) is a competitive inhibitor that induces the closed conformation. MPA is a potent inhibitor of mammalian IMPDHs but a poor inhibitor of the bacterial enzymes. MZP is a more potent inhibitor of bacterial IMPDH. Catalyzes the conversion of inosine 5'-phosphate (IMP) to xanthosine 5'-phosphate (XMP), the first committed and rate-limiting step in the de novo synthesis of guanine nucleotides, and therefore plays an important role in the regulation of cell growth. This chain is Inosine-5'-monophosphate dehydrogenase, found in Chlorobaculum parvum (strain DSM 263 / NCIMB 8327) (Chlorobium vibrioforme subsp. thiosulfatophilum).